A 503-amino-acid chain; its full sequence is ATP synthase subunit alpha (503 aa).

169–176 (GDRQTGKT) provides a ligand contact to ATP.

The protein belongs to the ATPase alpha/beta chains family. In terms of assembly, F-type ATPases have 2 components, CF(1) - the catalytic core - and CF(0) - the membrane proton channel. CF(1) has five subunits: alpha(3), beta(3), gamma(1), delta(1), epsilon(1). CF(0) has three main subunits: a(1), b(2) and c(9-12). The alpha and beta chains form an alternating ring which encloses part of the gamma chain. CF(1) is attached to CF(0) by a central stalk formed by the gamma and epsilon chains, while a peripheral stalk is formed by the delta and b chains.

The protein resides in the cell membrane. The enzyme catalyses ATP + H2O + 4 H(+)(in) = ADP + phosphate + 5 H(+)(out). Produces ATP from ADP in the presence of a proton gradient across the membrane. The alpha chain is a regulatory subunit. The chain is ATP synthase subunit alpha from Staphylococcus epidermidis (strain ATCC 35984 / DSM 28319 / BCRC 17069 / CCUG 31568 / BM 3577 / RP62A).